Here is a 595-residue protein sequence, read N- to C-terminus: MKNIRNFCIIAHIDHGKSTLADRLLEYTKTVEGKDMQAQVLDDMDLERERGITIKSHAIQMKYNYKGEEYILNLIDTPGHVDFSYEVSRSIAACEGALLIVDAAQGIQAQTISNLYMAIENDLEIIPVMNKIDLPSAMPEEVEDQIVELLGCPREDILRASGKTGEGVTEILNTIVEKVPAPKGDPEAPLQCLIFDSVFNPFRGIIAYFKVVNGVIRKGDHVKFIATGKEYDADEVGILKLDMCPREEIRTGDVGYIISGIKTSREVRVGDTITHVSRPAKDAIAGFEEVKPMVFAGVYPIDSEDFENLRASLEKLQLNDASLTFQPESSAALGFGFRCGFLGLLHMEIVQERLDREFNMDVITTVPNVSYIVHTKKGEEIEVHNPGGLPDPTLIDHIDEPFIRASVITNTTYIGPIMTLCLGKRGVLLKQEYISGDRVEIHYDLPLGEIVIDFYDKLKSISKGYASFDYHLHDFRPSKLAKLDILLNGEPVDALSTLTHVDNSVTFGRRMCEKLKELIPRQQFDIAIQAAIGAKIIARETIKAVRKDVTAKCYGGDISRKRKLLEKQKEGKKRMKQIGTVEVPQKAFLAVLKLD.

A tr-type G domain is found at 2-183 (KNIRNFCIIA…TIVEKVPAPK (182 aa)). GTP is bound by residues 14 to 19 (DHGKST) and 130 to 133 (NKID).

It belongs to the TRAFAC class translation factor GTPase superfamily. Classic translation factor GTPase family. LepA subfamily.

The protein localises to the cell inner membrane. It catalyses the reaction GTP + H2O = GDP + phosphate + H(+). Required for accurate and efficient protein synthesis under certain stress conditions. May act as a fidelity factor of the translation reaction, by catalyzing a one-codon backward translocation of tRNAs on improperly translocated ribosomes. Back-translocation proceeds from a post-translocation (POST) complex to a pre-translocation (PRE) complex, thus giving elongation factor G a second chance to translocate the tRNAs correctly. Binds to ribosomes in a GTP-dependent manner. This chain is Elongation factor 4, found in Parabacteroides distasonis (strain ATCC 8503 / DSM 20701 / CIP 104284 / JCM 5825 / NCTC 11152).